The chain runs to 106 residues: UPF0145 protein TM_0763 (106 aa).

Belongs to the UPF0145 family.

This Thermotoga maritima (strain ATCC 43589 / DSM 3109 / JCM 10099 / NBRC 100826 / MSB8) protein is UPF0145 protein TM_0763.